Here is a 469-residue protein sequence, read N- to C-terminus: IAA-alanine resistance protein 1 (469 aa).

Positions 1–28 are cleaved as a signal peptide; sequence MSFSLRKLLVPILVLVLFLDLCVESGFS. Residues 33–58 are disordered; sequence ARDDHVHHHGGGCSHSHDHDHDHDHD. Residues 47-58 show a composition bias toward basic and acidic residues; the sequence is HSHDHDHDHDHD. 2 consecutive transmembrane segments (helical) span residues 114 to 134 and 141 to 161; these read CSLL…IMFV and WFVD…AFLH. Residues 170-197 form a disordered region; it reads GHSHSNDHHENHDHHDHSHSDSPSHSHS. Over residues 173 to 193 the composition is skewed to basic and acidic residues; the sequence is HSNDHHENHDHHDHSHSDSPS. Residues 201 to 221 traverse the membrane as a helical segment; it reads LSVGLSVLAGIVVFLLVEKLV. The interval 228-315 is disordered; it reads SSGSNTWGHH…GKSDKPEQVE (88 aa). Basic residues predominate over residues 235–246; sequence GHHHHHHHAGSK. Basic and acidic residues predominate over residues 247 to 256; that stretch reads KLKDEGDHNN. Positions 257–279 are enriched in polar residues; sequence LDQQSSSDAIVNSSEKVSGGSTD. Over residues 292–315 the composition is skewed to basic and acidic residues; that stretch reads ATDKSDSGTEITSDGKSDKPEQVE. 3 consecutive transmembrane segments (helical) span residues 387–407, 415–435, and 448–468; these read LFFN…VLVW, SLIE…GVLA, and SACH…ISLI.

It belongs to the ZIP transporter (TC 2.A.5) family. KE4/Catsup subfamily.

Its subcellular location is the membrane. May participate in auxin metabolism or response. Probable transporter. The protein is IAA-alanine resistance protein 1 (IAR1) of Arabidopsis thaliana (Mouse-ear cress).